Here is a 1014-residue protein sequence, read N- to C-terminus: Valine--tRNA ligase (1014 aa).

The short motif at 49–59 is the 'HIGH' region element; that stretch reads PNVTGSLHMGH. A 'KMSKS' region motif is present at residues 542-546; sequence KMSKS. K545 contacts ATP. The stretch at 947-1014 forms a coiled coil; that stretch reads VVDIETLRAK…ILRLRLQTLV (68 aa).

Belongs to the class-I aminoacyl-tRNA synthetase family. ValS type 1 subfamily. In terms of assembly, monomer.

It localises to the cytoplasm. The catalysed reaction is tRNA(Val) + L-valine + ATP = L-valyl-tRNA(Val) + AMP + diphosphate. Its function is as follows. Catalyzes the attachment of valine to tRNA(Val). As ValRS can inadvertently accommodate and process structurally similar amino acids such as threonine, to avoid such errors, it has a 'posttransfer' editing activity that hydrolyzes mischarged Thr-tRNA(Val) in a tRNA-dependent manner. The chain is Valine--tRNA ligase from Nostoc sp. (strain PCC 7120 / SAG 25.82 / UTEX 2576).